The sequence spans 182 residues: Oligoribonuclease (182 aa).

Positions 8–171 constitute an Exonuclease domain; the sequence is LIWIDLEMTG…DDIRESIKEL (164 aa). Tyrosine 129 is an active-site residue.

Belongs to the oligoribonuclease family.

Its subcellular location is the cytoplasm. Functionally, 3'-to-5' exoribonuclease specific for small oligoribonucleotides. The protein is Oligoribonuclease of Actinobacillus succinogenes (strain ATCC 55618 / DSM 22257 / CCUG 43843 / 130Z).